The primary structure comprises 251 residues: Triosephosphate isomerase (251 aa).

Substrate is bound by residues Asn10 and Lys12. The active-site Electrophile is the His95. Catalysis depends on Glu167, which acts as the Proton acceptor.

The protein belongs to the triosephosphate isomerase family. In terms of assembly, homodimer.

The enzyme catalyses D-glyceraldehyde 3-phosphate = dihydroxyacetone phosphate. The protein operates within carbohydrate biosynthesis; gluconeogenesis. Its pathway is carbohydrate degradation; glycolysis; D-glyceraldehyde 3-phosphate from glycerone phosphate: step 1/1. This chain is Triosephosphate isomerase (TPI), found in Coprinopsis cinerea (strain Okayama-7 / 130 / ATCC MYA-4618 / FGSC 9003) (Inky cap fungus).